Consider the following 311-residue polypeptide: Malate dehydrogenase (311 aa).

NAD(+)-binding positions include 7–13 (GAAGGIG) and Asp-34. Positions 81 and 87 each coordinate substrate. Residues Asn-94 and 117-119 (ITN) contribute to the NAD(+) site. Residues Asn-119 and Arg-153 each contribute to the substrate site. His-177 functions as the Proton acceptor in the catalytic mechanism. Residue Met-227 participates in NAD(+) binding.

The protein belongs to the LDH/MDH superfamily. MDH type 1 family. As to quaternary structure, homodimer.

It carries out the reaction (S)-malate + NAD(+) = oxaloacetate + NADH + H(+). Its function is as follows. Catalyzes the reversible oxidation of malate to oxaloacetate. The polypeptide is Malate dehydrogenase (Shewanella frigidimarina (strain NCIMB 400)).